The following is a 590-amino-acid chain: Transcription factor bHLH13 (590 aa).

Disordered stretches follow at residues 274-296 and 385-439; these read LQHH…HRQF and AASS…EAER. A compositionally biased stretch (low complexity) spans 281–293; that stretch reads QQQQQQPPQQQQH. Positions 416-425 are enriched in basic residues; that stretch reads RPRKRGRRPA. One can recognise a bHLH domain in the interval 429-478; it reads AEALNHVEAERQRREKLNQRFYALRSVVPNISKMDKASLLGDAVSYINEL.

In terms of assembly, homodimer.

Its subcellular location is the nucleus. The polypeptide is Transcription factor bHLH13 (BHLH13) (Arabidopsis thaliana (Mouse-ear cress)).